A 311-amino-acid polypeptide reads, in one-letter code: Porphobilinogen deaminase (311 aa).

Residue Cys-242 is modified to S-(dipyrrolylmethanemethyl)cysteine.

The protein belongs to the HMBS family. In terms of assembly, monomer. Requires dipyrromethane as cofactor.

The catalysed reaction is 4 porphobilinogen + H2O = hydroxymethylbilane + 4 NH4(+). Its pathway is porphyrin-containing compound metabolism; protoporphyrin-IX biosynthesis; coproporphyrinogen-III from 5-aminolevulinate: step 2/4. Functionally, tetrapolymerization of the monopyrrole PBG into the hydroxymethylbilane pre-uroporphyrinogen in several discrete steps. This Neisseria meningitidis serogroup A / serotype 4A (strain DSM 15465 / Z2491) protein is Porphobilinogen deaminase (hemC).